The following is a 145-amino-acid chain: uncharacterized protein (145 aa).

The next 4 helical transmembrane spans lie at 1–21 (MELFKSIVAVIGIIATIYFLI), 28–48 (TVLIGVGLIMSILTLNPMGAL), 54–74 (SMTSGGLIMAICSSMGFAYVM), and 96–116 (FFLIPIATIITFFINIAIPSA).

The protein belongs to the DcuC/DcuD transporter (TC 2.A.61) family.

It localises to the cell membrane. This is an uncharacterized protein from Haemophilus influenzae (strain ATCC 51907 / DSM 11121 / KW20 / Rd).